A 319-amino-acid polypeptide reads, in one-letter code: tRNA-cytidine(32) 2-sulfurtransferase (319 aa).

The PP-loop motif signature appears at 49–54 (SGGKDS). [4Fe-4S] cluster is bound by residues cysteine 124, cysteine 127, and cysteine 215. Residues 276–319 (DGDTAFDKEEFRDPAPDADDVEDAPKKRTISILDSRGKESGCGA) are disordered. 2 stretches are compositionally biased toward basic and acidic residues: residues 280-290 (AFDKEEFRDPA) and 310-319 (SRGKESGCGA).

Belongs to the TtcA family. In terms of assembly, homodimer. Mg(2+) serves as cofactor. The cofactor is [4Fe-4S] cluster.

Its subcellular location is the cytoplasm. The catalysed reaction is cytidine(32) in tRNA + S-sulfanyl-L-cysteinyl-[cysteine desulfurase] + AH2 + ATP = 2-thiocytidine(32) in tRNA + L-cysteinyl-[cysteine desulfurase] + A + AMP + diphosphate + H(+). Its pathway is tRNA modification. Functionally, catalyzes the ATP-dependent 2-thiolation of cytidine in position 32 of tRNA, to form 2-thiocytidine (s(2)C32). The sulfur atoms are provided by the cysteine/cysteine desulfurase (IscS) system. The chain is tRNA-cytidine(32) 2-sulfurtransferase from Chromobacterium violaceum (strain ATCC 12472 / DSM 30191 / JCM 1249 / CCUG 213 / NBRC 12614 / NCIMB 9131 / NCTC 9757 / MK).